Consider the following 542-residue polypeptide: MAKDIKFSEEARRSMLRGVDTLANAVKVTLGPKGRNVVLEKKFGSPLITNDGVTIAKEIELEDAFENMGAKLVAEVASKTNDVAGDGTTTATVLAQAMIREGLKNVTAGANPMGLRKGIEKAVATAVEELKTISKPIEGKSSIAQVAAISAADEEVGQLIAEAMERVGNDGVITLEESKGFTTELDVVEGMQFDRGYASPYMITDSDKMEAVLDNPYILITDKKISNIQEILPVLEQVVQQGKPLLIIAEDVEGEALATLVVNKLRGTFNVVAVKAPGFGDRRKAMLEDIAILTDGEVITEELGRDLKSATIESLGRAGKVVVTKENTTIVEGVGSTEQIEARIGQIRAQLEETTSEFDREKLQERLAKLAGGVAVIKVGAATETELKERKLRIEDALNSTRAAVEEGIVAGGGTSLMNVYAKVASIAAEGDEATGINIVLRALEEPVRQIAINAGLEGSVVVERLKGEKVGVGFNAATGEWVNMLESGIVDPAKVTRSALQNAASVAAMFLTTEAVVADKPEENKPAMPDMGAMGGMPGMM.

Residues 29 to 32 (TLGP), 86 to 90 (DGTTT), G413, 476 to 478 (NAA), and D492 each bind ATP.

This sequence belongs to the chaperonin (HSP60) family. Forms a cylinder of 14 subunits composed of two heptameric rings stacked back-to-back. Interacts with the co-chaperonin GroES.

The protein localises to the cytoplasm. It catalyses the reaction ATP + H2O + a folded polypeptide = ADP + phosphate + an unfolded polypeptide.. Together with its co-chaperonin GroES, plays an essential role in assisting protein folding. The GroEL-GroES system forms a nano-cage that allows encapsulation of the non-native substrate proteins and provides a physical environment optimized to promote and accelerate protein folding. This Bacillus cytotoxicus (strain DSM 22905 / CIP 110041 / 391-98 / NVH 391-98) protein is Chaperonin GroEL.